Reading from the N-terminus, the 171-residue chain is 3-hydroxydecanoyl-[acyl-carrier-protein] dehydratase (171 aa).

His70 is an active-site residue.

The protein belongs to the thioester dehydratase family. FabA subfamily. In terms of assembly, homodimer.

It localises to the cytoplasm. It carries out the reaction a (3R)-hydroxyacyl-[ACP] = a (2E)-enoyl-[ACP] + H2O. The enzyme catalyses (3R)-hydroxydecanoyl-[ACP] = (2E)-decenoyl-[ACP] + H2O. The catalysed reaction is (2E)-decenoyl-[ACP] = (3Z)-decenoyl-[ACP]. The protein operates within lipid metabolism; fatty acid biosynthesis. Necessary for the introduction of cis unsaturation into fatty acids. Catalyzes the dehydration of (3R)-3-hydroxydecanoyl-ACP to E-(2)-decenoyl-ACP and then its isomerization to Z-(3)-decenoyl-ACP. Can catalyze the dehydratase reaction for beta-hydroxyacyl-ACPs with saturated chain lengths up to 16:0, being most active on intermediate chain length. The sequence is that of 3-hydroxydecanoyl-[acyl-carrier-protein] dehydratase from Shewanella baltica (strain OS223).